The following is a 764-amino-acid chain: 5-methyltetrahydropteroyltriglutamate--homocysteine methyltransferase (764 aa).

5-methyltetrahydropteroyltri-L-glutamate-binding positions include 16–19 and Lys115; that span reads RELK. L-homocysteine contacts are provided by residues 435-437 and Glu488; that span reads IGS. L-methionine is bound by residues 435–437 and Glu488; that span reads IGS. Residues 519–520 and Trp565 each bind 5-methyltetrahydropteroyltri-L-glutamate; that span reads RC. Position 603 (Asp603) interacts with L-homocysteine. Position 603 (Asp603) interacts with L-methionine. 5-methyltetrahydropteroyltri-L-glutamate is bound at residue Glu609. 3 residues coordinate Zn(2+): His645, Cys647, and Glu669. His698 functions as the Proton donor in the catalytic mechanism. Residue Cys730 coordinates Zn(2+).

It belongs to the vitamin-B12 independent methionine synthase family. The cofactor is Zn(2+).

The catalysed reaction is 5-methyltetrahydropteroyltri-L-glutamate + L-homocysteine = tetrahydropteroyltri-L-glutamate + L-methionine. It participates in amino-acid biosynthesis; L-methionine biosynthesis via de novo pathway; L-methionine from L-homocysteine (MetE route): step 1/1. In terms of biological role, catalyzes the transfer of a methyl group from 5-methyltetrahydrofolate to homocysteine resulting in methionine formation. The polypeptide is 5-methyltetrahydropteroyltriglutamate--homocysteine methyltransferase (Burkholderia pseudomallei (strain 1106a)).